The chain runs to 272 residues: Putative G-protein coupled receptor GPR32P1 (272 aa).

The disordered stretch occupies residues 1–24 (MNGVSEGTRGCSDRQPGALTQGHS). The Extracellular segment spans residues 1 to 46 (MNGVSEGTRGCSDRQPGALTQGHSCSRKMNASRCLSEEVGSLRPLT). Residue Asn30 is glycosylated (N-linked (GlcNAc...) asparagine). The chain crosses the membrane as a helical span at residues 47-67 (MAVLSASFVVGVLGNGLVPWV). Over 68–78 (TVFRMARTVST) the chain is Cytoplasmic. Residues 79-99 (VCFFHLALADFMLSLSLPILV) form a helical membrane-spanning segment. Residues 100–116 (YYIVSRQWLLGEWACKL) lie on the Extracellular side of the membrane. Residues Cys114 and Cys191 are joined by a disulfide bond. The helical transmembrane segment at 117-137 (YTGFVFLTFSTSNCLLVLISV) threads the bilayer. Residues 138–158 (DRCISVLYPVWALNHRTEQRA) lie on the Cytoplasmic side of the membrane. The chain crosses the membrane as a helical span at residues 159–179 (SWLAFGVWLLAAALCSAHLKF). Residues 180–213 (RTTRKWNGCMQCYLQFNLENETAQMWTQEVFGRQ) lie on the Extracellular side of the membrane. Residue Asn199 is glycosylated (N-linked (GlcNAc...) asparagine). Residues 214–234 (MAVIMAHFLLGFLGPLAIIGT) traverse the membrane as a helical segment. Over 235 to 272 (CAHLIRAKLLREGWVHANRPKRLLLVLVSALSAGSHLT) the chain is Cytoplasmic.

This sequence belongs to the G-protein coupled receptor 1 family.

It is found in the cell membrane. Functionally, orphan receptor. This is Putative G-protein coupled receptor GPR32P1 (GPR32P1) from Homo sapiens (Human).